We begin with the raw amino-acid sequence, 229 residues long: Aminodeoxyfutalosine nucleosidase (229 aa).

The active-site Proton acceptor is Glu13. Residues Gly79, Ile153, and 173-174 contribute to the substrate site; that span reads ME. Residue Asp197 is the Proton donor of the active site.

The protein belongs to the PNP/UDP phosphorylase family. Homodimer.

It carries out the reaction 6-amino-6-deoxyfutalosine + H2O = dehypoxanthine futalosine + adenine. The catalysed reaction is S-adenosyl-L-homocysteine + H2O = S-(5-deoxy-D-ribos-5-yl)-L-homocysteine + adenine. The enzyme catalyses S-methyl-5'-thioadenosine + H2O = 5-(methylsulfanyl)-D-ribose + adenine. It catalyses the reaction 5'-deoxyadenosine + H2O = 5-deoxy-D-ribose + adenine. It participates in quinol/quinone metabolism; menaquinone biosynthesis. The protein operates within amino-acid biosynthesis; L-methionine biosynthesis via salvage pathway; S-methyl-5-thio-alpha-D-ribose 1-phosphate from S-methyl-5'-thioadenosine (hydrolase route): step 1/2. Catalyzes the direct conversion of aminodeoxyfutalosine (AFL) into dehypoxanthine futalosine (DHFL) and adenine via the hydrolysis of the N-glycosidic bond; this reaction seems to represent an essential step in the menaquinone biosynthesis pathway in Campylobacter species. Also catalyzes the hydrolysis of 5'-methylthioadenosine (MTA) to adenine and 5'-methylthioribose. Can also probably use S-adenosylhomocysteine (SAH) as substrate, leading to adenine and S-ribosylhomocysteine. These other activities highlight the tremendous versatility of the enzyme, which also plays key roles in S-adenosylmethionine recycling and in the biosynthesis of the quorum-sensing molecule autoinducer-2. Shows negligible activity with futalosine (FL) as substrate. The sequence is that of Aminodeoxyfutalosine nucleosidase (pfs) from Campylobacter jejuni subsp. jejuni serotype O:2 (strain ATCC 700819 / NCTC 11168).